The chain runs to 25 residues: Pregnancy-associated glycoprotein 59g (25 aa).

A glycan (N-linked (GlcNAc...) asparagine) is linked at Asn-4.

Belongs to the peptidase A1 family. Highly expressed in the placenta between day 60 and day 100 of gestation.

The protein localises to the secreted. Its subcellular location is the extracellular space. This Ovis aries (Sheep) protein is Pregnancy-associated glycoprotein 59g.